A 436-amino-acid chain; its full sequence is 3-ketoacyl-CoA thiolase (436 aa).

The active-site Acyl-thioester intermediate is the cysteine 99. Catalysis depends on proton acceptor residues histidine 392 and cysteine 422.

This sequence belongs to the thiolase-like superfamily. Thiolase family. Heterotetramer of two alpha chains (FadJ) and two beta chains (FadI).

The protein localises to the cytoplasm. It catalyses the reaction an acyl-CoA + acetyl-CoA = a 3-oxoacyl-CoA + CoA. The protein operates within lipid metabolism; fatty acid beta-oxidation. Functionally, catalyzes the final step of fatty acid oxidation in which acetyl-CoA is released and the CoA ester of a fatty acid two carbons shorter is formed. This Shewanella halifaxensis (strain HAW-EB4) protein is 3-ketoacyl-CoA thiolase.